Reading from the N-terminus, the 320-residue chain is Beta-ketoacyl-[acyl-carrier-protein] synthase III (320 aa).

Active-site residues include cysteine 114 and histidine 247. An ACP-binding region spans residues 248 to 252 (QANRR). The active site involves asparagine 277.

This sequence belongs to the thiolase-like superfamily. FabH family. As to quaternary structure, homodimer.

The protein resides in the cytoplasm. The catalysed reaction is malonyl-[ACP] + acetyl-CoA + H(+) = 3-oxobutanoyl-[ACP] + CO2 + CoA. The protein operates within lipid metabolism; fatty acid biosynthesis. Functionally, catalyzes the condensation reaction of fatty acid synthesis by the addition to an acyl acceptor of two carbons from malonyl-ACP. Catalyzes the first condensation reaction which initiates fatty acid synthesis and may therefore play a role in governing the total rate of fatty acid production. Possesses both acetoacetyl-ACP synthase and acetyl transacylase activities. Its substrate specificity determines the biosynthesis of branched-chain and/or straight-chain of fatty acids. This chain is Beta-ketoacyl-[acyl-carrier-protein] synthase III, found in Neisseria gonorrhoeae (strain ATCC 700825 / FA 1090).